Reading from the N-terminus, the 161-residue chain is SsrA-binding protein (161 aa).

This sequence belongs to the SmpB family.

Its subcellular location is the cytoplasm. Functionally, required for rescue of stalled ribosomes mediated by trans-translation. Binds to transfer-messenger RNA (tmRNA), required for stable association of tmRNA with ribosomes. tmRNA and SmpB together mimic tRNA shape, replacing the anticodon stem-loop with SmpB. tmRNA is encoded by the ssrA gene; the 2 termini fold to resemble tRNA(Ala) and it encodes a 'tag peptide', a short internal open reading frame. During trans-translation Ala-aminoacylated tmRNA acts like a tRNA, entering the A-site of stalled ribosomes, displacing the stalled mRNA. The ribosome then switches to translate the ORF on the tmRNA; the nascent peptide is terminated with the 'tag peptide' encoded by the tmRNA and targeted for degradation. The ribosome is freed to recommence translation, which seems to be the essential function of trans-translation. The polypeptide is SsrA-binding protein (Psychromonas ingrahamii (strain DSM 17664 / CCUG 51855 / 37)).